Here is a 243-residue protein sequence, read N- to C-terminus: Probable transcriptional regulatory protein Ldb0677 (243 aa).

The disordered stretch occupies residues 1–22; that stretch reads MSGHSKWHNIQGRKNAQDAKRG.

This sequence belongs to the TACO1 family.

The protein resides in the cytoplasm. This chain is Probable transcriptional regulatory protein Ldb0677, found in Lactobacillus delbrueckii subsp. bulgaricus (strain ATCC 11842 / DSM 20081 / BCRC 10696 / JCM 1002 / NBRC 13953 / NCIMB 11778 / NCTC 12712 / WDCM 00102 / Lb 14).